Reading from the N-terminus, the 72-residue chain is Translation initiation factor IF-1 (72 aa).

Positions 1–72 (MSKQDVIEVE…TRGRIVYRYK (72 aa)) constitute an S1-like domain.

The protein belongs to the IF-1 family. Component of the 30S ribosomal translation pre-initiation complex which assembles on the 30S ribosome in the order IF-2 and IF-3, IF-1 and N-formylmethionyl-tRNA(fMet); mRNA recruitment can occur at any time during PIC assembly.

It localises to the cytoplasm. Its function is as follows. One of the essential components for the initiation of protein synthesis. Stabilizes the binding of IF-2 and IF-3 on the 30S subunit to which N-formylmethionyl-tRNA(fMet) subsequently binds. Helps modulate mRNA selection, yielding the 30S pre-initiation complex (PIC). Upon addition of the 50S ribosomal subunit IF-1, IF-2 and IF-3 are released leaving the mature 70S translation initiation complex. This chain is Translation initiation factor IF-1, found in Pelotomaculum thermopropionicum (strain DSM 13744 / JCM 10971 / SI).